A 276-amino-acid polypeptide reads, in one-letter code: Dermonecrotic toxin LlSicTox-alphaIV1ii (276 aa).

Residue H5 is part of the active site. Residues E25 and D27 each coordinate Mg(2+). H41 (nucleophile) is an active-site residue. 2 disulfide bridges follow: C45-C51 and C47-C193. Residue D85 participates in Mg(2+) binding.

Belongs to the arthropod phospholipase D family. Class II subfamily. It depends on Mg(2+) as a cofactor. In terms of tissue distribution, expressed by the venom gland.

The protein localises to the secreted. It carries out the reaction an N-(acyl)-sphingosylphosphocholine = an N-(acyl)-sphingosyl-1,3-cyclic phosphate + choline. The catalysed reaction is an N-(acyl)-sphingosylphosphoethanolamine = an N-(acyl)-sphingosyl-1,3-cyclic phosphate + ethanolamine. The enzyme catalyses a 1-acyl-sn-glycero-3-phosphocholine = a 1-acyl-sn-glycero-2,3-cyclic phosphate + choline. It catalyses the reaction a 1-acyl-sn-glycero-3-phosphoethanolamine = a 1-acyl-sn-glycero-2,3-cyclic phosphate + ethanolamine. Dermonecrotic toxins cleave the phosphodiester linkage between the phosphate and headgroup of certain phospholipids (sphingolipid and lysolipid substrates), forming an alcohol (often choline) and a cyclic phosphate. This toxin acts on sphingomyelin (SM). It may also act on ceramide phosphoethanolamine (CPE), lysophosphatidylcholine (LPC) and lysophosphatidylethanolamine (LPE), but not on lysophosphatidylserine (LPS), and lysophosphatidylglycerol (LPG). It acts by transphosphatidylation, releasing exclusively cyclic phosphate products as second products. Induces dermonecrosis, hemolysis, increased vascular permeability, edema, inflammatory response, and platelet aggregation. The polypeptide is Dermonecrotic toxin LlSicTox-alphaIV1ii (Loxosceles laeta (South American recluse spider)).